Here is a 91-residue protein sequence, read N- to C-terminus: NADH-ubiquinone oxidoreductase chain 4L (91 aa).

2 helical membrane passes run 2–22 (LIMI…QTHL) and 38–58 (LGLG…ALVL).

It belongs to the complex I subunit 4L family.

The protein resides in the mitochondrion membrane. It catalyses the reaction a ubiquinone + NADH + 5 H(+)(in) = a ubiquinol + NAD(+) + 4 H(+)(out). Functionally, core subunit of the mitochondrial membrane respiratory chain NADH dehydrogenase (Complex I) that is believed to belong to the minimal assembly required for catalysis. Complex I functions in the transfer of electrons from NADH to the respiratory chain. The immediate electron acceptor for the enzyme is believed to be ubiquinone. The sequence is that of NADH-ubiquinone oxidoreductase chain 4L (ND4L) from Branchiostoma floridae (Florida lancelet).